Here is a 1876-residue protein sequence, read N- to C-terminus: Phenolphthiocerol/phthiocerol polyketide synthase subunit A (1876 aa).

T2 is subject to N-acetylthreonine. One can recognise a Carrier 1 domain in the interval 9 to 83 (ADLRHWLIDY…ALAAYLAAPE (75 aa)). At S43 the chain carries O-(pantetheine 4'-phosphoryl)serine. One can recognise a Ketosynthase family 3 (KS3) domain in the interval 101–526 (DEPIAVVGMG…GTNAHVVIEQ (426 aa)). Catalysis depends on for beta-ketoacyl synthase activity residues C273, H408, and H448. Residues 626–950 (SPGPGTVFVY…NLNKAHTIHP (325 aa)) form an acyltransferase region. The active-site For malonyltransferase activity is the S720. The segment at 997-1112 (HTTVATVSAS…AQLSSSPSDS (116 aa)) is N-terminal hotdog fold. Residues 997 to 1267 (HTTVATVSAS…YRALDFGLDV (271 aa)) enclose the PKS/mFAS DH domain. H1027 (proton acceptor; for dehydratase activity) is an active-site residue. The disordered stretch occupies residues 1102-1130 (TAQLSSSPSDSASSLNEHHRANGQPPERA). Low complexity predominate over residues 1106-1115 (SSSPSDSASS). Residues 1130 to 1267 (AHRDLIPDLA…YRALDFGLDV (138 aa)) are C-terminal hotdog fold. Catalysis depends on D1186, which acts as the Proton donor; for dehydratase activity. Position 1491–1551 (1491–1551 (AAYLITGGLG…RRRIDAIRAL (61 aa))) interacts with NADP(+). The tract at residues 1491–1728 (AAYLITGGLG…DGYDVAQAVV (238 aa)) is beta-ketoacyl reductase. Positions 1759–1836 (EVRSELEQGL…SLASYLAKRV (78 aa)) constitute a Carrier 2 domain. Residue S1796 is modified to O-(pantetheine 4'-phosphoryl)serine.

NADP(+) serves as cofactor. Pantetheine 4'-phosphate is required as a cofactor.

The catalysed reaction is icosanoyl-[(phenol)carboxyphthiodiolenone synthase] + 2 (S)-methylmalonyl-CoA + 3 malonyl-CoA + 5 NADPH + 10 H(+) = C32-carboxyphthiodiolenone-[(phenol)carboxyphthiodiolenone synthase] + 5 CO2 + 5 NADP(+) + 5 CoA + 2 H2O. It catalyses the reaction docosanoyl-[(phenol)carboxyphthiodiolenone synthase] + 2 (S)-methylmalonyl-CoA + 3 malonyl-CoA + 5 NADPH + 10 H(+) = C34-carboxyphthiodiolenone-[(phenol)carboxyphthiodiolenone synthase] + 5 CO2 + 5 NADP(+) + 5 CoA + 2 H2O. The enzyme catalyses 17-(4-hydroxyphenyl)heptadecanoyl-[(phenol)carboxyphthiodiolenone synthase] + 2 (S)-methylmalonyl-CoA + 3 malonyl-CoA + 5 NADPH + 10 H(+) = C35-(phenol)carboxyphthiodiolenone-[(phenol)carboxyphthiodiolenone synthase] + 5 CO2 + 5 NADP(+) + 5 CoA + 2 H2O. It carries out the reaction 19-(4-hydroxyphenyl)nonadecanoyl-[(phenol)carboxyphthiodiolenone synthase] + 2 (S)-methylmalonyl-CoA + 3 malonyl-CoA + 5 NADPH + 10 H(+) = C37-(phenol)carboxyphthiodiolenone-[(phenol)carboxyphthiodiolenone synthase] + 5 CO2 + 5 NADP(+) + 5 CoA + 2 H2O. The protein operates within lipid metabolism; fatty acid biosynthesis. In terms of biological role, part of the PpsABCDE complex involved in the biosynthesis of the lipid core common to phthiocerols and phenolphthiocerols by successive additions of malonyl-CoA or methylmalonyl-CoA extender units. PpsA can accept as substrate the activated forms of either icosanoyl (C20), docosanoyl (C22) or lignoceroyl (C24) groups from FadD26, or a (4-hydroxyphenyl)-C17 or (4-hydroxyphenyl)-C19 fatty acyl from FadD29. PpsA initiates the biosynthesis and extends its substrate using a malonyl-CoA extender unit. The PpsB and PpsC proteins add the second and third malonyl-CoA extender units. PpsD adds an (R)-methylmalonyl unit and PpsE adds a second (R)-methylmalonyl unit. The incorporation of the methylmalonyl units results in formation of two branched methyl groups in the elongated product. This is Phenolphthiocerol/phthiocerol polyketide synthase subunit A (ppsA) from Mycobacterium tuberculosis (strain ATCC 25618 / H37Rv).